The sequence spans 205 residues: Large ribosomal subunit protein uL18 (205 aa).

It belongs to the universal ribosomal protein uL18 family. As to quaternary structure, part of the 50S ribosomal subunit. Contacts the 5S and 23S rRNAs.

Its function is as follows. This is one of the proteins that bind and probably mediate the attachment of the 5S RNA into the large ribosomal subunit, where it forms part of the central protuberance. The protein is Large ribosomal subunit protein uL18 of Pyrobaculum arsenaticum (strain DSM 13514 / JCM 11321 / PZ6).